We begin with the raw amino-acid sequence, 545 residues long: Phenylalanine--tRNA ligase beta subunit (545 aa).

One can recognise a B5 domain in the interval 268–343 (FLHKIQNVRE…MSIGYNNLEP (76 aa)). Mg(2+) contacts are provided by aspartate 321, aspartate 327, glutamate 330, and aspartate 331.

This sequence belongs to the phenylalanyl-tRNA synthetase beta subunit family. Type 2 subfamily. As to quaternary structure, tetramer of two alpha and two beta subunits. Mg(2+) is required as a cofactor.

Its subcellular location is the cytoplasm. It carries out the reaction tRNA(Phe) + L-phenylalanine + ATP = L-phenylalanyl-tRNA(Phe) + AMP + diphosphate + H(+). This is Phenylalanine--tRNA ligase beta subunit from Saccharolobus islandicus (strain M.16.27) (Sulfolobus islandicus).